The primary structure comprises 787 residues: Protein smoothened (787 aa).

Positions 1 to 27 (MAAARPARGPELPLLGLLLLLLLGDPG) are cleaved as a signal peptide. Residues 28 to 233 (RGAASSGNAT…EAEHQDMHSY (206 aa)) lie on the Extracellular side of the membrane. A disordered region spans residues 30–60 (AASSGNATGPGPRSAGGSARRSAAVTGPPPP). Asparagine 35 carries an N-linked (GlcNAc...) asparagine glycan. The segment covering 38–53 (GPGPRSAGGSARRSAA) has biased composition (low complexity). Cystine bridges form between cysteine 64–cysteine 178, cysteine 70–cysteine 134, cysteine 78–cysteine 127, cysteine 118–cysteine 154, and cysteine 147–cysteine 169. The FZ domain occupies 65 to 181 (GRAAPCEPLR…DRFPEGCTNE (117 aa)). Residue aspartate 95 participates in cholesterol binding. An N-linked (GlcNAc...) asparagine glycan is attached at asparagine 188. 2 cysteine pairs are disulfide-bonded: cysteine 193–cysteine 213 and cysteine 217–cysteine 295. A helical membrane pass occupies residues 234–254 (IAAFGAVTGLCTLFTLATFVA). Over 255-262 (DWRNSNRY) the chain is Cytoplasmic. A helical transmembrane segment spans residues 263 to 283 (PAVILFYVNACFFVGSIGWLA). Residues 284–314 (QFMDGARREIVCRADGTMRLGEPTSNETLSC) lie on the Extracellular side of the membrane. Asparagine 309 carries N-linked (GlcNAc...) asparagine glycosylation. A disulfide bridge links cysteine 314 with cysteine 390. The chain crosses the membrane as a helical span at residues 315-335 (VIIFVIVYYALMAGVVWFVVL). Residues 336-358 (TYAWHTSFKALGTTYQPLSGKTS) lie on the Cytoplasmic side of the membrane. The chain crosses the membrane as a helical span at residues 359–379 (YFHLLTWSLPFVLTVAILAVA). Topologically, residues 380–402 (QVDGDSVSGICFVGYKNYRYRAG) are extracellular. Tyrosine 394 provides a ligand contact to cholesterol. A helical membrane pass occupies residues 403–423 (FVLAPIGLVLIVGGYFLIRGV). At 424-451 (MTLFSIKSNHPGLLSEKAASKINETMLR) the chain is on the cytoplasmic side. The helical transmembrane segment at 452–472 (LGIFGFLAFGFVLITFSCHFY) threads the bilayer. Topologically, residues 473-524 (DFFNQAEWERSFRDYVLCQANVTIGLPTKQPIPDCEIKNRPSLLVEKINLFA) are extracellular. Cysteine 490 and cysteine 507 are joined by a disulfide. Residues 525-545 (MFGTGIAMSTWVWTKATLLIW) traverse the membrane as a helical segment. An interaction with BBS5 and BBS7 region spans residues 538-569 (TKATLLIWRRTWCRLTGQSDDEPKRIKKSKMI). Residues 546–787 (RRTWCRLTGQ…TELMDADSDF (242 aa)) are Cytoplasmic-facing. Serine 556, serine 574, and serine 590 each carry phosphoserine. A required for interaction with PRKACA region spans residues 570-653 (AKAFSKRHEL…TPVPPEEQAN (84 aa)). An interaction with DLG5 region spans residues 581–593 (QNPGQELSFSMHT). Threonine 593 carries the post-translational modification Phosphothreonine. Serine 595 and serine 638 each carry phosphoserine. Phosphothreonine is present on residues threonine 640 and threonine 644. At serine 662 the chain carries Phosphoserine. The disordered stretch occupies residues 667 to 704 (KRLGRKKKRRKRKKEVCPLAPPPELHPPAPAPSTIPRL). A compositionally biased stretch (basic residues) spans 668-680 (RLGRKKKRRKRKK). Residues 685–699 (LAPPPELHPPAPAPS) are compositionally biased toward pro residues.

This sequence belongs to the G-protein coupled receptor Fz/Smo family. Homodimer. Interacts (via C-terminus) with protein kinase A catalytic subunit PRKACA; interacts with free PRKACA subunits and the interaction leads to sequestration of PRKACA at the membrane, preventing PRKACA-mediated phosphorylation of GLI transcription factors. Interacts with ARRB2. Interacts with KIF7. Interacts with BBS5 and BBS7; the interactions are indicative for the association of SMO with the BBsome complex to facilitate ciliary localization of SMO. Interacts with DLG5 and SDCBP. Interacts with GAS8/DRC4. Post-translationally, phosphorylation by GRK kinases is required for interaction with protein kinase A catalytic subunit PRKACA.

The protein localises to the cell membrane. It localises to the cell projection. Its subcellular location is the cilium. Its function is as follows. G protein-coupled receptor which associates with the patched protein (PTCH) to transduce hedgehog protein signaling. Binding of sonic hedgehog (SHH) to its receptor patched prevents inhibition of smoothened (SMO) by patched. When active, SMO binds to and sequesters protein kinase A catalytic subunit PRKACA at the cell membrane, preventing PRKACA-mediated phosphorylation of GLI transcription factors which releases the GLI proteins from PRKACA-mediated inhibition and allows for transcriptional activation of hedgehog pathway target genes. Required for the accumulation of KIF7, GLI2 and GLI3 in the cilia. Interacts with DLG5 at the ciliary base to induce the accumulation of KIF7 and GLI2 at the ciliary tip for GLI2 activation. This chain is Protein smoothened (SMO), found in Homo sapiens (Human).